The sequence spans 376 residues: Serpin B6 (376 aa).

Methionine 1 carries the N-acetylmethionine modification. Residue serine 151 is modified to Phosphoserine. Position 195 is an N6-acetyllysine (lysine 195).

It belongs to the serpin family. Ov-serpin subfamily. Forms a complex with the monomeric form of beta-tryptase.

The protein resides in the cytoplasm. In terms of biological role, inhibitor of cathepsin G, kallikrein-8 and thrombin. May play an important role in the inner ear in the protection against leakage of lysosomal content during stress. May be involved in the regulation of serine proteinases present in the brain or extravasated from the blood. The chain is Serpin B6 (SERPINB6) from Macaca fascicularis (Crab-eating macaque).